Consider the following 32-residue polypeptide: Fimbrin sef21 (32 aa).

The protein localises to the fimbrium. The sequence is that of Fimbrin sef21 from Salmonella enteritidis.